A 397-amino-acid chain; its full sequence is Mannosylglycerate synthase (397 aa).

Residues 7–11, Ile35, Gln66, Lys76, Asp100, and 100–101 each bind GDP-alpha-D-mannose; these read PFKHE and DA. Position 102 (Asp102) interacts with a divalent metal cation. Residues Arg131 and 136 to 139 contribute to the (R)-glycerate site; that span reads AMIT. GDP-alpha-D-mannose is bound by residues Leu163 and Asp192. Residue His217 coordinates a divalent metal cation. GDP-alpha-D-mannose-binding residues include Arg218 and Tyr220.

It belongs to the glycosyltransferase 78 family. As to quaternary structure, homotetramer. Dimer of dimers. Mg(2+) is required as a cofactor. The cofactor is Ca(2+). Mn(2+) serves as cofactor. Requires Ni(2+) as cofactor. It depends on Co(2+) as a cofactor.

The enzyme catalyses (R)-glycerate + GDP-alpha-D-mannose = (2R)-2-O-(alpha-D-mannosyl)-glycerate + GDP + H(+). Its activity is regulated as follows. Inhibited by GDP. Its function is as follows. Involved in the biosynthesis of the stress protectant 2-O-alpha-D-mannosyl glycerate (MG) which is produced in response to growth at supraoptimal temperature and salinity, and protects several enzymes against inactivation by temperature, freeze-drying and osmotic stress. Catalyzes the condensation of alpha-GDP-D-mannose (GDP-Man) with D-glycerate to produce alpha-mannosyl-D-glycerate. It is specific for GDP-Man, but it can also use alpha-GDP-D-glucose (GDP-Glc), beta-GDP-D-fructose, alpha-UDP-D-mannose and alpha-UDP-D-glucose as sugar donors. It is specific for D-glycerate, but it can also use D-lactate and glycolate as sugar acceptors. This reaction occurs with a net retention of anomeric configuration; the newly formed glycosidic linkage has the same alpha configuration as the sugar donor. The chain is Mannosylglycerate synthase (mgs) from Rhodothermus marinus (Rhodothermus obamensis).